Here is a 328-residue protein sequence, read N- to C-terminus: MSQLDLLNIVHRPRRLRRTAALRNLVQENTLTVNDLVFPLFVMPGTNAVEEVPSMPGSFRFTIDRAVEECKELYDLGIQAIDLFGIPEKKTEDGSEAYNDNGILQQAIRAIKKAVPELCIMTDVALDPFTPFGHDGLVRDGIILNDETVEVLQKMAVSHAEAGADFVSPSDMMDGRIGAIREALDESDHSDVGILSYAAKYASSFYGPFRDALHSAPQFGDKSTYQMNPANTDEAMKEVELDIIEGADIVMVKPGLAYLDIVWRTKERFDVPVAIYHVSGEYAMVKAAAANGWIDEERVMMESLLCMKRAGADIIFTYYAKEAAKKLR.

Lys-200 serves as the catalytic Schiff-base intermediate with substrate. Residues Arg-210 and Lys-222 each contribute to the 5-aminolevulinate site. Glu-238 lines the Mg(2+) pocket. Residue Lys-253 is the Schiff-base intermediate with substrate of the active site. The 5-aminolevulinate site is built by Ser-279 and Tyr-318.

Belongs to the ALAD family. In terms of assembly, homooctamer.

It carries out the reaction 2 5-aminolevulinate = porphobilinogen + 2 H2O + H(+). It functions in the pathway porphyrin-containing compound metabolism; protoporphyrin-IX biosynthesis; coproporphyrinogen-III from 5-aminolevulinate: step 1/4. Its activity is regulated as follows. Stimulated by magnesium, inhibited by zinc. Functionally, catalyzes an early step in the biosynthesis of tetrapyrroles. Binds two molecules of 5-aminolevulinate per subunit, each at a distinct site, and catalyzes their condensation to form porphobilinogen. The chain is Delta-aminolevulinic acid dehydratase (hemB) from Chlorobaculum tepidum (strain ATCC 49652 / DSM 12025 / NBRC 103806 / TLS) (Chlorobium tepidum).